Consider the following 404-residue polypeptide: MSRVSQARNLGKYFLLIDNMLVVLGFFVVFPLISIRFVDQMGWAAVMVGIALGLRQFIQQGLGIFGGAIADRFGAKPMIVTGMLMRAAGFATMGIAHEPWLLWFSCFLSGLGGTLFDPPRSALVVKLIRPEQRGRFFSLLMMQDSAGAVIGALLGSWLLQYDFRLVCAMGAILFIVCAIFNAWLLPAWKLSTVRTPVREGMRRVISDKRFVTYVLTLAGYYMLAVQVMLMLPIMVNDVAGSPAAVKWMYAIEACLSLTLLYPIARWSEKRFRLEHRLMAGLLIMSLSMIPIGLAGNLQQLFTLICAFYIGSVIAEPARETLSASLTDARARGSYMGFSRLGLAIGGAIGYIGGGWLFDMGKTLAQPELPWMMLGIIGFITFLALGWQFSHKRTPRQYTGARRLI.

At 1–12 the chain is on the cytoplasmic side; it reads MSRVSQARNLGK. A helical membrane pass occupies residues 13–33; it reads YFLLIDNMLVVLGFFVVFPLI. Residues 34–98 lie on the Periplasmic side of the membrane; the sequence is SIRFVDQMGW…GFATMGIAHE (65 aa). The chain crosses the membrane as a helical span at residues 99-116; the sequence is PWLLWFSCFLSGLGGTLF. At 117-138 the chain is on the cytoplasmic side; the sequence is DPPRSALVVKLIRPEQRGRFFS. Residues 139–159 traverse the membrane as a helical segment; the sequence is LLMMQDSAGAVIGALLGSWLL. Topologically, residues 160–164 are periplasmic; it reads QYDFR. A helical membrane pass occupies residues 165–185; the sequence is LVCAMGAILFIVCAIFNAWLL. At 186–213 the chain is on the cytoplasmic side; it reads PAWKLSTVRTPVREGMRRVISDKRFVTY. Residues 214–234 traverse the membrane as a helical segment; it reads VLTLAGYYMLAVQVMLMLPIM. Topologically, residues 235 to 243 are periplasmic; the sequence is VNDVAGSPA. Residues 244-264 traverse the membrane as a helical segment; sequence AVKWMYAIEACLSLTLLYPIA. Topologically, residues 265-276 are cytoplasmic; it reads RWSEKRFRLEHR. A helical transmembrane segment spans residues 277 to 297; the sequence is LMAGLLIMSLSMIPIGLAGNL. At 298–299 the chain is on the periplasmic side; it reads QQ. Residues 300–320 form a helical membrane-spanning segment; the sequence is LFTLICAFYIGSVIAEPARET. The Cytoplasmic segment spans residues 321-339; it reads LSASLTDARARGSYMGFSR. The chain crosses the membrane as a helical span at residues 340-360; the sequence is LGLAIGGAIGYIGGGWLFDMG. Residues 361–367 are Periplasmic-facing; sequence KTLAQPE. A helical membrane pass occupies residues 368–388; the sequence is LPWMMLGIIGFITFLALGWQF. Residues 389 to 404 are Cytoplasmic-facing; that stretch reads SHKRTPRQYTGARRLI.

The protein belongs to the major facilitator superfamily. DHA1 family. MdtH (TC 2.A.1.2.21) subfamily.

It is found in the cell inner membrane. The sequence is that of Multidrug resistance protein MdtH from Salmonella arizonae (strain ATCC BAA-731 / CDC346-86 / RSK2980).